Reading from the N-terminus, the 574-residue chain is Tyrosinase (574 aa).

Cu cation-binding residues include His67, His95, His104, His275, His279, and His304. A cross-link (2'-(S-cysteinyl)-histidine (Cys-His)) is located at residues 93–95 (CTH).

This sequence belongs to the tyrosinase family. It depends on Cu(2+) as a cofactor.

It carries out the reaction 2 L-dopa + O2 = 2 L-dopaquinone + 2 H2O. The enzyme catalyses L-tyrosine + O2 = L-dopaquinone + H2O. Functionally, this is a copper-containing oxidase that functions in the formation of pigments such as melanins and other polyphenolic compounds. The sequence is that of Tyrosinase (TYR) from Podospora anserina (Pleurage anserina).